Reading from the N-terminus, the 380-residue chain is MAKKVAICTLLYSRDYLPGALTLAYQLQKLLKHAVVEDEITLCLLIEKKLFGDEFKPQEIALIRSLFKEIIIIEPLKDQEKSIEKNKANLELLKRPELSHTLLKARLWELVQFDQVLFLDADTLPLNKEFFEILRLYPEQTRFQIAAVPDIGWPDMFNTGVLLLIPDLDMATSLQDFLIKTVSIDGADQGIFNQFFNPICNYSKEVLHKVSPLMEWIRLPFTYNVTMPNYGYQSSPAMNFFQQHIRLIHFIGTFKPWSRNTTDYDDHYYQLWRSTQRELYSECHLSNYFTHLQLGNIETETNFYHEPPCLQDLLNHGKRENQKHVDLDITSVDRNASQKSTAEKHDIEKPTSKPQSAFKFDWESTDYLDRVQRAFPKPDT.

UDP is bound by residues L10, Y16, and R95. UDP-alpha-D-glucose-binding residues include L10, Y16, R95, K104, D120, A121, D122, N158, T159, D185, D188, and Q189. Residues D120, A121, and D122 each contribute to the UDP site. D120 contacts Mn(2+). Position 122 (D122) interacts with Mn(2+). O-linked (Glc...) tyrosine glycosylation is found at Y230 and Y232. Residues H249, G252, and K255 each contribute to the UDP site. H249 is a binding site for Mn(2+). UDP-alpha-D-glucose-binding residues include G252 and K255. The tract at residues 331 to 355 is disordered; it reads SVDRNASQKSTAEKHDIEKPTSKPQ. Residues 341–351 are compositionally biased toward basic and acidic residues; the sequence is TAEKHDIEKPT. The O-linked (Glc...) tyrosine glycan is linked to Y367.

The protein belongs to the glycosyltransferase 8 family. Glycogenin subfamily. Interacts with glycogen synthase GSY2. Requires Mn(2+) as cofactor.

Its subcellular location is the cytoplasm. It is found in the vacuole. The catalysed reaction is L-tyrosyl-[glycogenin] + UDP-alpha-D-glucose = alpha-D-glucosyl-L-tyrosyl-[glycogenin] + UDP + H(+). It carries out the reaction [1,4-alpha-D-glucosyl](n)-L-tyrosyl-[glycogenin] + UDP-alpha-D-glucose = [1,4-alpha-D-glucosyl](n+1)-L-tyrosyl-[glycogenin] + UDP + H(+). Functionally, self-glucosylating initiator of glycogen synthesis. It catalyzes the formation of a short alpha (1,4)-glucosyl chain covalently attached via a glucose 1-O-tyrosyl linkage to internal tyrosine residues and these chains act as primers for the elongation reaction catalyzed by glycogen synthase. Capable of transferring glucosyl residues to unbound acceptors such as free oligoglucans or oligoglucan derivatives. The sequence is that of Glycogenin-2 from Saccharomyces cerevisiae (strain ATCC 204508 / S288c) (Baker's yeast).